Here is a 201-residue protein sequence, read N- to C-terminus: ADP-ribosylation factor-related protein 1 (201 aa).

Met-1 carries the post-translational modification N-acetylmethionine. Residues 24–31 (GLDNAGKT), 75–79 (DLGGQ), and 134–137 (NKQD) contribute to the GTP site.

Belongs to the small GTPase superfamily. Arf family. Interacts with SYS1.

Its subcellular location is the golgi apparatus. It is found in the trans-Golgi network. In terms of biological role, trans-Golgi-associated GTPase that regulates protein sorting. Controls the targeting of ARL1 and its effector to the trans-Golgi. Required for the lipidation of chylomicrons in the intestine and required for VLDL lipidation in the liver. The chain is ADP-ribosylation factor-related protein 1 (ARFRP1) from Pongo abelii (Sumatran orangutan).